The sequence spans 390 residues: Putative methylesterase 11, chloroplastic (390 aa).

A chloroplast-targeting transit peptide spans 1-46 (MGNLCSLFTPPKPVKKRKPITKRQSSIGASSSGSGLNSNRWNNRVR). 2 disordered regions span residues 1 to 52 (MGNL…SSRR) and 94 to 119 (QGSC…DPLL). Over residues 25–48 (SSIGASSSGSGLNSNRWNNRVRSS) the composition is skewed to low complexity. A compositionally biased stretch (polar residues) spans 94-104 (QGSCSKKNQLP). A compositionally biased stretch (low complexity) spans 105-114 (RSSSSRSRSS). Residues 137-241 (NHFVLVHGGS…KAVFLAAAML (105 aa)) enclose the AB hydrolase-1 domain. Asp-213 serves as the catalytic Acyl-ester intermediate. Active-site charge relay system residues include Asp-339 and His-367.

This sequence belongs to the AB hydrolase superfamily. Methylesterase family.

The protein localises to the plastid. Its subcellular location is the chloroplast. Its function is as follows. Putative methylesterase. The chain is Putative methylesterase 11, chloroplastic from Arabidopsis thaliana (Mouse-ear cress).